An 832-amino-acid polypeptide reads, in one-letter code: Conserved oligomeric Golgi complex subunit 5 (832 aa).

Pro residues-rich tracts occupy residues 1–11 (MALPPSSPSPS) and 23–38 (NPPPSSLSSGAPPPQT). Residues 1–49 (MALPPSSPSPSSPSLQRLSTFKNPPPSSLSSGAPPPQTPSSSSSSPLDS) are disordered. The span at 39-49 (PSSSSSSPLDS) shows a compositional bias: low complexity.

Belongs to the COG5 family. Homodimer. Component of the conserved oligomeric Golgi complex which is composed of eight different subunits and is required for normal Golgi morphology and localization. Interacts with COG3, COG6, COG7 and COG8.

It localises to the golgi apparatus membrane. In terms of biological role, required for normal Golgi function. The polypeptide is Conserved oligomeric Golgi complex subunit 5 (Arabidopsis thaliana (Mouse-ear cress)).